We begin with the raw amino-acid sequence, 509 residues long: Protein disulfide-isomerase (509 aa).

A signal peptide spans 1–18 (MLRRAVLCLALAVTAGWA). Positions 19–135 (WAAEEEDNVL…IVNWLKKRTG (117 aa)) constitute a Thioredoxin 1 domain. Residues Cys-54 and Cys-57 each act as nucleophile in the active site. Cys-54 and Cys-57 are joined by a disulfide. N6-succinyllysine occurs at positions 223 and 272. Residues Ser-332 and Ser-358 each carry the phosphoserine modification. In terms of domain architecture, Thioredoxin 2 spans 347 to 476 (FLEGKIKPHL…FKKFLESGGQ (130 aa)). Residues Cys-398 and Cys-401 each act as nucleophile in the active site. An intrachain disulfide couples Cys-398 to Cys-401. Ser-428 bears the Phosphoserine mark. The interval 471–509 (LESGGQDGAGDEDGLEDLEEAEEPDLEEDDDQKAVRDEL) is disordered. The span at 479 to 501 (AGDEDGLEDLEEAEEPDLEEDDD) shows a compositional bias: acidic residues. The short motif at 506–509 (RDEL) is the Prevents secretion from ER element.

This sequence belongs to the protein disulfide isomerase family. In terms of assembly, heterodimer; heterodimerizes with the protein microsomal triglyceride transfer MTTP. Homodimer. Monomers and homotetramers may also occur. Interacts with P4HA2, forming a heterotetramer consisting of 2 alpha subunits (P4HA2) and 2 beta (P4HB), where P4HB plays the role of a structural subunit; this tetramer catalyzes the formation of 4-hydroxyproline in collagen. Also constitutes the structural subunit of the microsomal triacylglycerol transfer protein MTTP in mammalian cells. Stabilizes both enzymes and retain them in the ER without contributing to the catalytic activity. Binds UBQLN1. Interacts with ERO1B. Interacts with ILDR2. Interacts with ERN1/IRE1A (via N-terminus); the interaction is enhanced by phosphorylation of P4HB by FAM20C in response to endoplasmic reticulum stress and results in attenuation of ERN1 activity. Phosphorylation of Ser-358 by FAM20C is induced by endoplasmic reticulum stress and results in a functional switch from oxidoreductase to molecular chaperone. It also promotes interaction with ERN1.

Its subcellular location is the endoplasmic reticulum. The protein localises to the endoplasmic reticulum lumen. It localises to the melanosome. The protein resides in the cell membrane. It catalyses the reaction Catalyzes the rearrangement of -S-S- bonds in proteins.. This multifunctional protein catalyzes the formation, breakage and rearrangement of disulfide bonds. At the cell surface, seems to act as a reductase that cleaves disulfide bonds of proteins attached to the cell. May therefore cause structural modifications of exofacial proteins. Inside the cell, seems to form/rearrange disulfide bonds of nascent proteins. At high concentrations and following phosphorylation by FAM20C, functions as a chaperone that inhibits aggregation of misfolded proteins. At low concentrations, facilitates aggregation (anti-chaperone activity). May be involved with other chaperones in the structural modification of the TG precursor in hormone biogenesis. Also acts as a structural subunit of various enzymes such as prolyl 4-hydroxylase and microsomal triacylglycerol transfer protein MTTP. Receptor for LGALS9; the interaction retains P4HB at the cell surface of Th2 T helper cells, increasing disulfide reductase activity at the plasma membrane, altering the plasma membrane redox state and enhancing cell migration. In Oryctolagus cuniculus (Rabbit), this protein is Protein disulfide-isomerase (P4HB).